The primary structure comprises 63 residues: uncharacterized protein (63 aa).

This is an uncharacterized protein from Saccharomyces cerevisiae (strain ATCC 204508 / S288c) (Baker's yeast).